The sequence spans 37 residues: Large ribosomal subunit protein bL36c (37 aa).

It belongs to the bacterial ribosomal protein bL36 family.

It is found in the plastid. It localises to the chloroplast. In Huperzia lucidula (Shining clubmoss), this protein is Large ribosomal subunit protein bL36c.